Here is a 183-residue protein sequence, read N- to C-terminus: ATP-dependent protease subunit HslV (183 aa).

The active site involves Thr10. Positions 164, 167, and 170 each coordinate Na(+).

The protein belongs to the peptidase T1B family. HslV subfamily. A double ring-shaped homohexamer of HslV is capped on each side by a ring-shaped HslU homohexamer. The assembly of the HslU/HslV complex is dependent on binding of ATP.

Its subcellular location is the cytoplasm. The catalysed reaction is ATP-dependent cleavage of peptide bonds with broad specificity.. With respect to regulation, allosterically activated by HslU binding. Protease subunit of a proteasome-like degradation complex believed to be a general protein degrading machinery. The protein is ATP-dependent protease subunit HslV of Rhizorhabdus wittichii (strain DSM 6014 / CCUG 31198 / JCM 15750 / NBRC 105917 / EY 4224 / RW1) (Sphingomonas wittichii).